A 148-amino-acid polypeptide reads, in one-letter code: uncharacterized protein (148 aa).

Disordered stretches follow at residues Met1–Pro86 and Arg122–Cys148. Residues Arg38–Pro57 show a composition bias toward basic residues. Over residues Gln134–Cys148 the composition is skewed to polar residues.

This sequence belongs to the Epstein-Barr virus BLLF2 family.

This is an uncharacterized protein from Homo sapiens (Human).